The following is a 278-amino-acid chain: MTVLPSVDFFPSGNTSVAIEPRLPQADFPEHHHDFHEIVIVEHGTGIHVFNGQPYTITGGTVCFVRDHDRYLYEHTDNLCLTNVLYRSPDRFQFLAGLNQLLPQELDGQYPSHWRVNHSVLQQVRQLVAQMEQQEGENDLPSTASREILFMQLLLLLRKSSLQENLENSASRLNLLLAWLEDHFADEVNWDAVADQFSLSLRTLHRQLKQQTGLTPQRYLNRLRLMKARHLLRHSEASVTDIAYRCGFSDSNHFSTLFRREFNWSPRDIRQGRDGFLQ.

The 99-residue stretch at 174–272 (NLLLAWLEDH…NWSPRDIRQG (99 aa)) folds into the HTH araC/xylS-type domain. 2 DNA-binding regions (H-T-H motif) span residues 191–212 (DAVADQFSLSLRTLHRQLKQQT) and 239–262 (VTDIAYRCGFSDSNHFSTLFRREF).

Binds DNA as a dimer.

The protein resides in the cytoplasm. Functionally, activates expression of the rhaBAD and rhaT operons. This is HTH-type transcriptional activator RhaS from Shigella dysenteriae serotype 1 (strain Sd197).